Reading from the N-terminus, the 451-residue chain is DNA-directed RNA polymerase subunit Rpo1C (451 aa).

The interval 1 to 68 is unknown; the sequence is MQDIIGKIED…DDDELLDAVE (68 aa). The DNA-directed RNA polymerase subunit Rpo1C stretch occupies residues 69-451; it reads DDYQRILKVQ…SVSVVMKERK (383 aa).

This sequence belongs to the RNA polymerase beta' chain family. In terms of assembly, part of the RNA polymerase complex.

Its subcellular location is the cytoplasm. It carries out the reaction RNA(n) + a ribonucleoside 5'-triphosphate = RNA(n+1) + diphosphate. DNA-dependent RNA polymerase (RNAP) catalyzes the transcription of DNA into RNA using the four ribonucleoside triphosphates as substrates. Forms part of the jaw domain. The chain is DNA-directed RNA polymerase subunit Rpo1C from Methanothermobacter thermautotrophicus (strain ATCC 29096 / DSM 1053 / JCM 10044 / NBRC 100330 / Delta H) (Methanobacterium thermoautotrophicum).